The sequence spans 411 residues: MKKYLVGGAVRDSLLNLPITEKDWVITGSSAQEMLSIGYEQVGKDFPVFLHPKSHEEYALARTERKLGSGYTGFICHTEPSITIEEDLYRRDLTINAMAYDMNGNLLDPYNGQKDIQLRLLRHVSNAFYEDPLRVLRVARFAAKLKNIGFTIAIETFEIMTHMIHELKSLSPERVWMETKKALITDNPQVYFQVLKKCGALKILFPELDILFTIPQCTTHHSNLMNLGNQTMTRLSNISCLSNDLAIRYAILCCNLGSEMNPRKQPLKQLTQKKPQISIINNLCNRLKVPNNILKLTKIVFMYYHDLYDVTKLSSEMIMTIFQAFDCWRTPTRIELIIKINQSQLLGSKFHINYLFFQSTLLRTAFNETTQIKANDIINSGFSGINISQELYSRRLHVLKHWKNKFLTHKQ.

ATP contacts are provided by glycine 8 and arginine 11. Residues glycine 8 and arginine 11 each contribute to the CTP site. Residues glutamate 21 and aspartate 23 each contribute to the Mg(2+) site. 3 residues coordinate ATP: arginine 91, arginine 137, and arginine 140. Positions 91, 137, and 140 each coordinate CTP. Residues 227-328 form the HD domain; that stretch reads LGNQTMTRLS…MTIFQAFDCW (102 aa).

This sequence belongs to the tRNA nucleotidyltransferase/poly(A) polymerase family. Bacterial CCA-adding enzyme type 2 subfamily. Requires Mg(2+) as cofactor.

It carries out the reaction a tRNA precursor + 2 CTP + ATP = a tRNA with a 3' CCA end + 3 diphosphate. The catalysed reaction is a tRNA with a 3' CCA end + 2 CTP + ATP = a tRNA with a 3' CCACCA end + 3 diphosphate. Catalyzes the addition and repair of the essential 3'-terminal CCA sequence in tRNAs without using a nucleic acid template. Adds these three nucleotides in the order of C, C, and A to the tRNA nucleotide-73, using CTP and ATP as substrates and producing inorganic pyrophosphate. tRNA 3'-terminal CCA addition is required both for tRNA processing and repair. Also involved in tRNA surveillance by mediating tandem CCA addition to generate a CCACCA at the 3' terminus of unstable tRNAs. While stable tRNAs receive only 3'-terminal CCA, unstable tRNAs are marked with CCACCA and rapidly degraded. This is CCA-adding enzyme from Blochmanniella floridana.